Reading from the N-terminus, the 141-residue chain is Transcription antitermination protein NusB (141 aa).

The protein belongs to the NusB family.

Involved in transcription antitermination. Required for transcription of ribosomal RNA (rRNA) genes. Binds specifically to the boxA antiterminator sequence of the ribosomal RNA (rrn) operons. This is Transcription antitermination protein NusB from Neisseria gonorrhoeae (strain ATCC 700825 / FA 1090).